The chain runs to 483 residues: MAAKFLPRFWRSGSQAELLDFQNNNVVAEGKLDFEHGTLKGKSGRYGDDEEDVRRGHIEDLANHSLLNKLLRRTLVDSPHNVEVLQRDPTSPLFSVKSFEELHLKNELLRGIYAMGFNRPSKIQENALPMMLADPPQNLIAQSQSGTGKTAAFVLAMLSRVDANKKYPQCICLSPTFELALQTGKVVEEMGKFCAGIEVIYALRGNRPGKGSRLEAQIVIGTPGTVLDWCFKLRLITVENISVFVLDEADVMINVQGHSDHSVRVKRSMPKSCQMLLFSATFEDSVWAFAERIVPDPNIIKLKKEELTLKNIQQFYDQCENKEQKYSALCNLYGVITIAQAIVFCQTRKIASWLSQKLSDDGHQVALLSGELPVYDRADMIQRFREGREKVLVTTNVCARGIDVEQVSIVVNFDLPVNVDGSVDFETYLHRIGRTGRFGKKGIAVSLIENFFVYMLKEIEDHFNTKITKLNSMDMDEMGKIWK.

Residues Lys97–Glu125 carry the Q motif motif. The 171-residue stretch at Met130–Ile300 folds into the Helicase ATP-binding domain. Residue Ser143 to Thr150 coordinates ATP. The short motif at Asp247–Asp250 is the DEAD box element. The Helicase C-terminal domain maps to Asn311–Met478.

The protein belongs to the DEAD box helicase family. As to expression, an mRNA component of germ plasm. Localizes to the granulo-fibrillar material (GFM) of the mitochondrial cloud in stage I oocytes. Associated, at a low level, with the periphery of mature germinal granules in later stage oocytes. Localizes to the vegetal cortex in stage II oocytes and segregates with germ plasm during early embryogenesis. In adults, expression is restricted to the ovary and, at a lower level, to spermatogonia, spermatocytes and spermatids of the testis.

Its subcellular location is the cytoplasm. The protein localises to the nucleus. It carries out the reaction ATP + H2O = ADP + phosphate + H(+). In terms of biological role, ATP-dependent RNA helicase. The sequence is that of ATP-dependent RNA helicase DDX25 from Xenopus laevis (African clawed frog).